We begin with the raw amino-acid sequence, 318 residues long: Energy-coupling factor transporter ATP-binding protein EcfA2 (318 aa).

The 250-residue stretch at 22-271 folds into the ABC transporter domain; sequence LRAQGLKCVF…PEIMQTTSIA (250 aa). 59 to 66 is a binding site for ATP; that stretch reads GNSGSGKS.

The protein belongs to the ABC transporter superfamily. Energy-coupling factor EcfA family. As to quaternary structure, forms a stable energy-coupling factor (ECF) transporter complex composed of 2 membrane-embedded substrate-binding proteins (S component), 2 ATP-binding proteins (A component) and 2 transmembrane proteins (T component).

It localises to the cell membrane. Functionally, ATP-binding (A) component of a common energy-coupling factor (ECF) ABC-transporter complex. Unlike classic ABC transporters this ECF transporter provides the energy necessary to transport a number of different substrates. This chain is Energy-coupling factor transporter ATP-binding protein EcfA2, found in Mycoplasmoides gallisepticum (strain R(low / passage 15 / clone 2)) (Mycoplasma gallisepticum).